The sequence spans 681 residues: DNA ligase (681 aa).

NAD(+)-binding positions include 44–48 (DYIYD), 94–95 (SL), and glutamate 124. Lysine 126 acts as the N6-AMP-lysine intermediate in catalysis. Positions 147, 181, 297, and 321 each coordinate NAD(+). Residues cysteine 415, cysteine 418, cysteine 433, and cysteine 438 each contribute to the Zn(2+) site. The region spanning 598-681 (DETSFFYGKK…EAQAKEGTDK (84 aa)) is the BRCT domain.

This sequence belongs to the NAD-dependent DNA ligase family. LigA subfamily. Mg(2+) serves as cofactor. The cofactor is Mn(2+).

It catalyses the reaction NAD(+) + (deoxyribonucleotide)n-3'-hydroxyl + 5'-phospho-(deoxyribonucleotide)m = (deoxyribonucleotide)n+m + AMP + beta-nicotinamide D-nucleotide.. Functionally, DNA ligase that catalyzes the formation of phosphodiester linkages between 5'-phosphoryl and 3'-hydroxyl groups in double-stranded DNA using NAD as a coenzyme and as the energy source for the reaction. It is essential for DNA replication and repair of damaged DNA. This chain is DNA ligase, found in Leuconostoc citreum (strain KM20).